A 559-amino-acid chain; its full sequence is T-complex protein 1 subunit gamma (559 aa).

C369 and C375 are joined by a disulfide. Positions 537–559 are disordered; it reads GGASVTDGNGQEIPETFGDARDG.

The protein belongs to the TCP-1 chaperonin family. Heterooligomeric complex of about 850 to 900 kDa that forms two stacked rings, 12 to 16 nm in diameter.

The protein localises to the cytoplasm. Molecular chaperone; assists the folding of proteins upon ATP hydrolysis. Known to play a role, in vitro, in the folding of actin and tubulin. The sequence is that of T-complex protein 1 subunit gamma from Tetrahymena pyriformis.